A 369-amino-acid polypeptide reads, in one-letter code: 3-dehydroquinate synthase (369 aa).

NAD(+) is bound by residues 80-85 (DGEQYK), 114-118 (GVIGD), 138-139 (TT), Lys-151, Lys-160, and 178-181 (TLKT). The Zn(2+) site is built by Glu-193, His-256, and His-273.

Belongs to the sugar phosphate cyclases superfamily. Dehydroquinate synthase family. The cofactor is Co(2+). Zn(2+) is required as a cofactor. NAD(+) serves as cofactor.

It is found in the cytoplasm. The enzyme catalyses 7-phospho-2-dehydro-3-deoxy-D-arabino-heptonate = 3-dehydroquinate + phosphate. The protein operates within metabolic intermediate biosynthesis; chorismate biosynthesis; chorismate from D-erythrose 4-phosphate and phosphoenolpyruvate: step 2/7. Its function is as follows. Catalyzes the conversion of 3-deoxy-D-arabino-heptulosonate 7-phosphate (DAHP) to dehydroquinate (DHQ). This is 3-dehydroquinate synthase from Psychrobacter cryohalolentis (strain ATCC BAA-1226 / DSM 17306 / VKM B-2378 / K5).